We begin with the raw amino-acid sequence, 810 residues long: DNA gyrase subunit A (810 aa).

The region spanning 36 to 502 (LPDVRDGLKP…EVLKTSMSDL (467 aa)) is the Topo IIA-type catalytic domain. Tyr124 serves as the catalytic O-(5'-phospho-DNA)-tyrosine intermediate. Residues 499-810 (MSDLMQKENI…SLVSVSKFIK (312 aa)) are C-terminal domain. The short motif at 529–535 (QGTGGKG) is the GyrA-box element.

The protein belongs to the type II topoisomerase GyrA/ParC subunit family. As to quaternary structure, heterotetramer, composed of two GyrA and two GyrB chains. In the heterotetramer, GyrA contains the active site tyrosine that forms a transient covalent intermediate with DNA, while GyrB binds cofactors and catalyzes ATP hydrolysis.

The protein localises to the cytoplasm. It carries out the reaction ATP-dependent breakage, passage and rejoining of double-stranded DNA.. Functionally, a type II topoisomerase that negatively supercoils closed circular double-stranded (ds) DNA in an ATP-dependent manner to modulate DNA topology and maintain chromosomes in an underwound state. Negative supercoiling favors strand separation, and DNA replication, transcription, recombination and repair, all of which involve strand separation. Also able to catalyze the interconversion of other topological isomers of dsDNA rings, including catenanes and knotted rings. Type II topoisomerases break and join 2 DNA strands simultaneously in an ATP-dependent manner. This chain is DNA gyrase subunit A, found in Borreliella burgdorferi (strain ATCC 35210 / DSM 4680 / CIP 102532 / B31) (Borrelia burgdorferi).